The sequence spans 418 residues: Glutamyl-tRNA reductase (418 aa).

Substrate contacts are provided by residues 49 to 52, S109, 114 to 116, and Q120; these read TCNR and EPQ. The Nucleophile role is filled by C50. 189 to 194 provides a ligand contact to NADP(+); it reads GAGETI.

This sequence belongs to the glutamyl-tRNA reductase family. In terms of assembly, homodimer.

The enzyme catalyses (S)-4-amino-5-oxopentanoate + tRNA(Glu) + NADP(+) = L-glutamyl-tRNA(Glu) + NADPH + H(+). The protein operates within porphyrin-containing compound metabolism; protoporphyrin-IX biosynthesis; 5-aminolevulinate from L-glutamyl-tRNA(Glu): step 1/2. Functionally, catalyzes the NADPH-dependent reduction of glutamyl-tRNA(Glu) to glutamate 1-semialdehyde (GSA). This is Glutamyl-tRNA reductase from Escherichia coli O45:K1 (strain S88 / ExPEC).